A 442-amino-acid chain; its full sequence is Probable 6-phospho-beta-glucosidase (442 aa).

Residue 5–73 (LKIVTIGGGS…VPIDIHLTLD (69 aa)) coordinates NAD(+). Positions 96 and 150 each coordinate substrate. 2 residues coordinate Mn(2+): C172 and H202. Y256 functions as the Proton acceptor in the catalytic mechanism.

Belongs to the glycosyl hydrolase 4 family. NAD(+) serves as cofactor. A divalent metal cation is required as a cofactor.

The enzyme catalyses 6-phospho-beta-D-glucosyl-(1-&gt;4)-D-glucose + H2O = D-glucose 6-phosphate + D-glucose. Functionally, hydrolyzes phospho-beta-glucosides. This chain is Probable 6-phospho-beta-glucosidase (licH), found in Bacillus subtilis (strain 168).